We begin with the raw amino-acid sequence, 457 residues long: Arginine biosynthesis bifunctional protein ArgJ, mitochondrial (457 aa).

Substrate-binding residues include T184, K213, T224, E312, N452, and T457. T224 acts as the Nucleophile in catalysis.

This sequence belongs to the ArgJ family. As to quaternary structure, heterodimer of an alpha and a beta chain. The alpha and beta chains are autoproteolytically processed from a single precursor protein within the mitochondrion.

Its subcellular location is the mitochondrion matrix. The enzyme catalyses N(2)-acetyl-L-ornithine + L-glutamate = N-acetyl-L-glutamate + L-ornithine. It carries out the reaction L-glutamate + acetyl-CoA = N-acetyl-L-glutamate + CoA + H(+). The protein operates within amino-acid biosynthesis; L-arginine biosynthesis; L-ornithine and N-acetyl-L-glutamate from L-glutamate and N(2)-acetyl-L-ornithine (cyclic): step 1/1. It participates in amino-acid biosynthesis; L-arginine biosynthesis; N(2)-acetyl-L-ornithine from L-glutamate: step 1/4. Its function is as follows. Catalyzes two activities which are involved in the cyclic version of arginine biosynthesis: the synthesis of acetylglutamate from glutamate and acetyl-CoA, and of ornithine by transacetylation between acetylornithine and glutamate. This chain is Arginine biosynthesis bifunctional protein ArgJ, mitochondrial, found in Aspergillus terreus (strain NIH 2624 / FGSC A1156).